Consider the following 437-residue polypeptide: Cytochrome c biogenesis protein Ccs1 (437 aa).

Helical transmembrane passes span 23–43, 82–102, and 168–188; these read LQFS…GTII, TWWF…CSLS, and LAPI…VLGL.

The protein belongs to the Ccs1/CcsB family. In terms of assembly, may interact with CcsA.

The protein localises to the plastid. The protein resides in the chloroplast thylakoid membrane. Its function is as follows. Required during biogenesis of c-type cytochromes (cytochrome c6 and cytochrome f) at the step of heme attachment. The polypeptide is Cytochrome c biogenesis protein Ccs1 (Porphyra purpurea (Red seaweed)).